Consider the following 297-residue polypeptide: MCAQRVTDTPEVKWQKVLYERQPFPDNYVDQRFLEELRKNIYARKYQYWAVVFESSVVIQQLCSVCVFVVIWWYMDEGLLAPQWLFGTGLASSLVGYVLFDLIDGGDGRKKSGRTRWADLKSTLVFITFTYGFSPVLKTLTESVSTDTIYAMAVFMLLGHLIFFDYGANAAIVSSTLSLNMAIFASVCLASRLPRSLHAFIMVTFAIQIFALWPMLQKKLKAYTPRSYVGVTLLFAFSAFGGLLSISAVGAILFALLLFSISCLCPYYLIHLQLFKENIHGPWDEAEIKEDLSRFLS.

The next 4 membrane-spanning stretches (helical) occupy residues 67–87, 88–108, 153–173, and 239–259; these read VFVVIWWYMDEGLLAPQWLFG, TGLASSLVGYVLFDLIDGGDG, AVFMLLGHLIFFDYGANAAIV, and AFGGLLSISAVGAILFALLLF.

This sequence belongs to the PIGC family. As to quaternary structure, component of the glycosylphosphatidylinositol-N-acetylglucosaminyltransferase (GPI-GnT) complex composed at least by PIGA, PIGC, PIGH, PIGP, PIGQ, PIGY and DPM2. Interacts with PIGQ. Interacts with the heterodimer PIGA:PIGH.

Its subcellular location is the endoplasmic reticulum membrane. The protein operates within glycolipid biosynthesis; glycosylphosphatidylinositol-anchor biosynthesis. Part of the glycosylphosphatidylinositol-N-acetylglucosaminyltransferase (GPI-GnT) complex that catalyzes the transfer of N-acetylglucosamine from UDP-N-acetylglucosamine to phosphatidylinositol and participates in the first step of GPI biosynthesis. This chain is Phosphatidylinositol N-acetylglucosaminyltransferase subunit C, found in Mus musculus (Mouse).